The primary structure comprises 312 residues: Olfactory receptor 51A7 (312 aa).

The Extracellular portion of the chain corresponds to 1-25 (MSVLNNSEVKLFLLIGIPGLEHAHI). N-linked (GlcNAc...) asparagine glycosylation is present at N5. Residues 26–46 (WFSIPICLMYLLAIMGNCTIL) traverse the membrane as a helical segment. Residues 47 to 54 (FIIKTEPS) lie on the Cytoplasmic side of the membrane. Residues 55–75 (LHEPMYYFLAMLAVSDMGLSL) traverse the membrane as a helical segment. Over 76-99 (SSLPTMLRVFLFNAMGISPNACFA) the chain is Extracellular. An intrachain disulfide couples C97 to C189. Residues 100–120 (QEFFIHGFTVMESSVLLIMSL) traverse the membrane as a helical segment. Residues 121 to 139 (DRFLAIHNPLRYSSILTSN) are Cytoplasmic-facing. Residues 140 to 160 (RVAKMGLILAIRSILLVIPFP) traverse the membrane as a helical segment. Residues 161 to 196 (FTLRRLKYCQKNLLSHSYCLHQDTMKLACSDNKTNV) are Extracellular-facing. An N-linked (GlcNAc...) asparagine glycan is attached at N192. The helical transmembrane segment at 197 to 216 (IYGFFIALCTMLDLALIVLS) threads the bilayer. The Cytoplasmic portion of the chain corresponds to 217 to 236 (YVLILKTILSIASLAERLKA). Residues 237 to 257 (LNTCVSHICAVLTFYVPIITL) form a helical membrane-spanning segment. Residues 258–272 (AAMHHFAKHKSPLVV) are Extracellular-facing. The chain crosses the membrane as a helical span at residues 273 to 293 (ILIADMFLLVPPLMNPIVYCV). At 294 to 312 (KTRQIWEKILGKLLNVCGR) the chain is on the cytoplasmic side.

The protein belongs to the G-protein coupled receptor 1 family.

It is found in the cell membrane. Functionally, odorant receptor. In Homo sapiens (Human), this protein is Olfactory receptor 51A7 (OR51A7).